Reading from the N-terminus, the 572-residue chain is Dihydroxy-acid dehydratase (572 aa).

Cys-54 is a [2Fe-2S] cluster binding site. Asp-86 is a Mg(2+) binding site. Cys-127 is a [2Fe-2S] cluster binding site. Mg(2+)-binding residues include Asp-128 and Lys-129. Lys-129 is subject to N6-carboxylysine. Cys-199 serves as a coordination point for [2Fe-2S] cluster. Glu-449 provides a ligand contact to Mg(2+). Ser-475 acts as the Proton acceptor in catalysis.

The protein belongs to the IlvD/Edd family. In terms of assembly, homodimer. The cofactor is [2Fe-2S] cluster. Mg(2+) is required as a cofactor.

The enzyme catalyses (2R)-2,3-dihydroxy-3-methylbutanoate = 3-methyl-2-oxobutanoate + H2O. It catalyses the reaction (2R,3R)-2,3-dihydroxy-3-methylpentanoate = (S)-3-methyl-2-oxopentanoate + H2O. Its pathway is amino-acid biosynthesis; L-isoleucine biosynthesis; L-isoleucine from 2-oxobutanoate: step 3/4. The protein operates within amino-acid biosynthesis; L-valine biosynthesis; L-valine from pyruvate: step 3/4. Functionally, functions in the biosynthesis of branched-chain amino acids. Catalyzes the dehydration of (2R,3R)-2,3-dihydroxy-3-methylpentanoate (2,3-dihydroxy-3-methylvalerate) into 2-oxo-3-methylpentanoate (2-oxo-3-methylvalerate) and of (2R)-2,3-dihydroxy-3-methylbutanoate (2,3-dihydroxyisovalerate) into 2-oxo-3-methylbutanoate (2-oxoisovalerate), the penultimate precursor to L-isoleucine and L-valine, respectively. The polypeptide is Dihydroxy-acid dehydratase (Pelagibacter ubique (strain HTCC1062)).